Here is a 205-residue protein sequence, read N- to C-terminus: Putative protein phosphatase inhibitor 2-like protein 1 (205 aa).

4 disordered regions span residues M1–S44, G64–T92, A107–Y148, and V171–S205. Required for binding PPP1CC regions lie at residues K12–D17 and K43–T55. Residues D17–V26 are compositionally biased toward polar residues. Residues E30–S44 are compositionally biased toward basic and acidic residues. Phosphothreonine; by GSK3 is present on T73. 2 stretches are compositionally biased toward acidic residues: residues G80–T91 and S121–S130. Position 87 is a phosphoserine; by CK2 (S87). Residues P131–R144 show a composition bias toward basic and acidic residues. The required for binding PPP1CC catalytic center, displacing metal ions and inhibition of PPP1CC catalytic activity stretch occupies residues H147 to E150. The segment covering S182 to S205 has biased composition (polar residues).

It belongs to the protein phosphatase inhibitor 2 family.

In terms of biological role, inhibitor of protein-phosphatase 1. The chain is Putative protein phosphatase inhibitor 2-like protein 1 (PPP1R2P1) from Homo sapiens (Human).